Consider the following 154-residue polypeptide: 6,7-dimethyl-8-ribityllumazine synthase (154 aa).

5-amino-6-(D-ribitylamino)uracil contacts are provided by residues F22, 56–58 (AFE), and 80–82 (AVI). A (2S)-2-hydroxy-3-oxobutyl phosphate-binding site is contributed by 85–86 (AT). Residue H88 is the Proton donor of the active site. Residue F113 participates in 5-amino-6-(D-ribitylamino)uracil binding. R127 serves as a coordination point for (2S)-2-hydroxy-3-oxobutyl phosphate.

The protein belongs to the DMRL synthase family. As to quaternary structure, forms an icosahedral capsid composed of 60 subunits, arranged as a dodecamer of pentamers.

The enzyme catalyses (2S)-2-hydroxy-3-oxobutyl phosphate + 5-amino-6-(D-ribitylamino)uracil = 6,7-dimethyl-8-(1-D-ribityl)lumazine + phosphate + 2 H2O + H(+). The protein operates within cofactor biosynthesis; riboflavin biosynthesis; riboflavin from 2-hydroxy-3-oxobutyl phosphate and 5-amino-6-(D-ribitylamino)uracil: step 1/2. Catalyzes the formation of 6,7-dimethyl-8-ribityllumazine by condensation of 5-amino-6-(D-ribitylamino)uracil with 3,4-dihydroxy-2-butanone 4-phosphate. This is the penultimate step in the biosynthesis of riboflavin. The chain is 6,7-dimethyl-8-ribityllumazine synthase from Geobacillus kaustophilus (strain HTA426).